The following is a 479-amino-acid chain: Catalase A (479 aa).

The active site involves His-63. Tyr-346 contacts heme.

The protein belongs to the catalase family. The cofactor is heme.

It localises to the peroxisome matrix. It carries out the reaction 2 H2O2 = O2 + 2 H2O. Its function is as follows. Catalyzes the degradation of hydrogen peroxide (H(2)O(2)) generated by peroxisomal oxidases to water and oxygen, thereby protecting cells from the toxic effects of hydrogen peroxide. The sequence is that of Catalase A (catA) from Botryotinia fuckeliana (Noble rot fungus).